A 212-amino-acid polypeptide reads, in one-letter code: Large ribosomal subunit protein uL3 (212 aa).

The segment at 133–156 (SMTHGSKNHRLPGSTGAGTTPGRV) is disordered.

This sequence belongs to the universal ribosomal protein uL3 family. As to quaternary structure, part of the 50S ribosomal subunit. Forms a cluster with proteins L14 and L19.

In terms of biological role, one of the primary rRNA binding proteins, it binds directly near the 3'-end of the 23S rRNA, where it nucleates assembly of the 50S subunit. The polypeptide is Large ribosomal subunit protein uL3 (Crocosphaera subtropica (strain ATCC 51142 / BH68) (Cyanothece sp. (strain ATCC 51142))).